A 429-amino-acid chain; its full sequence is MTRSDELFEQAKKTIPGGVNSPVRAFSGVGGSPRFIEKADGAYIFDADGKKYIDYVGSWGPMILGHNHPKIREAVLAAVENGLSFGAPTELEITMAEKVIEMVPSIEQVRMVSSGTEATMSAIRLARGFTNRDKILKFEGCYHGHADCLLVKAGSGALTLGQPSSPGIPEDFAKHTLTATYNDLDSVKAIFEQYPEEISCIIIEPVAGNMNCIPPIDGFLQGLRAICDQYGALMIIDEVMTGFRVSKSGAQGHYGVTPDLTTLGKVIGGGMPVGAFGGRKDVMQFIAPTGPVYQAGTLSGNPIAMSAGLAQMEALCEEGVYEQLAAKTQYIAEGFKAAANKHGIPMAINYVGGMFGFFFTDEATVTNFAQVTKCDTALFAEFYHLMLDEGVYLAPSAYEAGFLSLAHGEEELEATLAAADRVFAKLAKR.

N6-(pyridoxal phosphate)lysine is present on Lys-265.

Belongs to the class-III pyridoxal-phosphate-dependent aminotransferase family. HemL subfamily. Homodimer. It depends on pyridoxal 5'-phosphate as a cofactor.

It localises to the cytoplasm. The enzyme catalyses (S)-4-amino-5-oxopentanoate = 5-aminolevulinate. It functions in the pathway porphyrin-containing compound metabolism; protoporphyrin-IX biosynthesis; 5-aminolevulinate from L-glutamyl-tRNA(Glu): step 2/2. This chain is Glutamate-1-semialdehyde 2,1-aminomutase, found in Shewanella halifaxensis (strain HAW-EB4).